The primary structure comprises 158 residues: Cyclic pyranopterin monophosphate synthase (158 aa).

Residues 76-78 (LCH) and 114-115 (ME) contribute to the substrate site. The active site involves Asp129.

Belongs to the MoaC family. As to quaternary structure, homohexamer; trimer of dimers.

The catalysed reaction is (8S)-3',8-cyclo-7,8-dihydroguanosine 5'-triphosphate = cyclic pyranopterin phosphate + diphosphate. Its pathway is cofactor biosynthesis; molybdopterin biosynthesis. Catalyzes the conversion of (8S)-3',8-cyclo-7,8-dihydroguanosine 5'-triphosphate to cyclic pyranopterin monophosphate (cPMP). This is Cyclic pyranopterin monophosphate synthase from Shewanella loihica (strain ATCC BAA-1088 / PV-4).